A 367-amino-acid chain; its full sequence is Innexin inx4 (367 aa).

The Cytoplasmic segment spans residues 1-21; the sequence is MYAAVKPLSKYLQFKSVHIYD. The chain crosses the membrane as a helical span at residues 22–42; the sequence is AIFTLHSKVTVALLLACTFLL. At 43-110 the chain is on the extracellular side; sequence SSKQYFGDPI…PENRNYITYY (68 aa). Residues 111 to 131 traverse the membrane as a helical segment; that stretch reads QWVVLVLLLESFVFYMPAFLW. Over 132–186 the chain is Cytoplasmic; the sequence is KIWEGGRLKHLCDDFHKMAVCKDKSRTHLRVLVNYFSSDYKETHFRYFVSYVFCE. A helical transmembrane segment spans residues 187 to 207; that stretch reads ILNLSISILNFLLLDVFFGGF. At 208–268 the chain is on the extracellular side; sequence WGRYRNALLS…LLPLNILNEK (61 aa). Residues 269–289 form a helical membrane-spanning segment; that stretch reads IFAFLWIWFILVAMLISLKFL. Over 290–367 the chain is Cytoplasmic; that stretch reads YRLATVLYPG…IKIPPGADKI (78 aa).

Belongs to the pannexin family. In terms of tissue distribution, expressed in nurse cells and oocyte during oogenesis. Uniform expression in imaginal wing disk and low expression in developing imaginal CNS. Expressed in embryonic pole cells and primordial germ cells.

It localises to the cell membrane. The protein localises to the cell junction. Its subcellular location is the gap junction. Structural component of the gap junctions in germline cells. Required for differentiation and survival of germline cysts in females and of spermatogonia in males; gap junctional communication between spermatogonia and somatic cyst cells may be required for normal differentiation and survival of spermatogonia. This Drosophila melanogaster (Fruit fly) protein is Innexin inx4 (zpg).